The chain runs to 556 residues: Arginine--tRNA ligase (556 aa).

Residues 130-140 (ANPTGPIHLGG) carry the 'HIGH' region motif.

It belongs to the class-I aminoacyl-tRNA synthetase family. Monomer.

The protein localises to the cytoplasm. It carries out the reaction tRNA(Arg) + L-arginine + ATP = L-arginyl-tRNA(Arg) + AMP + diphosphate. In Corynebacterium jeikeium (strain K411), this protein is Arginine--tRNA ligase.